Reading from the N-terminus, the 354-residue chain is Protein RecA (354 aa).

67–74 (GPESSGKT) lines the ATP pocket. The disordered stretch occupies residues 331 to 354 (NQDSTPDFSVDDNGEGVKETNEDF). The span at 345-354 (EGVKETNEDF) shows a compositional bias: basic and acidic residues.

Belongs to the RecA family.

Its subcellular location is the cytoplasm. Functionally, can catalyze the hydrolysis of ATP in the presence of single-stranded DNA, the ATP-dependent uptake of single-stranded DNA by duplex DNA, and the ATP-dependent hybridization of homologous single-stranded DNAs. It interacts with LexA causing its activation and leading to its autocatalytic cleavage. This is Protein RecA from Citrobacter koseri (strain ATCC BAA-895 / CDC 4225-83 / SGSC4696).